The chain runs to 689 residues: Pyocin-S2 (689 aa).

H656, H681, and H685 together coordinate Zn(2+).

Belongs to the colicin/pyosin nuclease family. In terms of assembly, purified pyocin S2 makes up a complex of the two (large and small) proteins. The large protein, but not the pyocin complex, shows in vitro DNase activity.

Causes breakdown of chromosomal DNA as well as complete inhibition of lipid synthesis in sensitive cells. This is Pyocin-S2 (pys2) from Pseudomonas aeruginosa (strain ATCC 15692 / DSM 22644 / CIP 104116 / JCM 14847 / LMG 12228 / 1C / PRS 101 / PAO1).